The primary structure comprises 514 residues: MDLANHGLILLQQLNAQREFGFLCDCTVAIGDVYFKAHKSVLASFSNYFKMLFVHQTSECVRLKPTDIQPDIFSYLLHLMYTGKMAPQLIDPVRLEQGIKFLHAYPLIQEASLASQGAFSHPDQVFPLASSLYGIQIADHQLRQATKIASAPEKLGRDPRPQTSRISQEQVPEASQLSQLTSNLAQVNRTNMTPSDPLQTSLSPELVSTPVPPPPPGEETNLEASSSDEQPASLTIAHVKPSIMKRNGSFPKYYACHLCGRRFTLRSSLREHLQIHTGVPFTSSQQGESRVPLTLCSNAADLGKDAMEVPEAGMISDSELQHISDSPIIDGQQQSETPPPSDIADIDNLEQADQEREVKRRKYECTICGRKFIQKSHWREHMYIHTGKPFKCSTCDKSFCRANQAARHVCLNQSIDTYTMVDKQTLELCTFEEGSQMDNMLVQTNKPYKCNLCDKTFSTPNEVVKHSCQNQNSDVFALDEGRSILLGSGDSEVTEPDHPVLASIKKEQETVLLD.

In terms of domain architecture, BTB spans 24 to 89; the sequence is CDCTVAIGDV…MYTGKMAPQL (66 aa). Glycyl lysine isopeptide (Lys-Gly) (interchain with G-Cter in SUMO2) cross-links involve residues Lys147 and Lys154. A disordered region spans residues 149–231; that stretch reads ASAPEKLGRD…LEASSSDEQP (83 aa). Composition is skewed to polar residues over residues 161-200 and 222-231; these read PQTS…PLQT and LEASSSDEQP. A C2H2-type 1 zinc finger spans residues 254-276; it reads YACHLCGRRFTLRSSLREHLQIH. Ser341 is modified (phosphoserine). A Glycyl lysine isopeptide (Lys-Gly) (interchain with G-Cter in SUMO2) cross-link involves residue Lys362. A C2H2-type 2 zinc finger spans residues 363–385; it reads YECTICGRKFIQKSHWREHMYIH. The C2H2-type 3; atypical zinc finger occupies 390–410; it reads FKCSTCDKSFCRANQAARHVC. The C2H2-type 4; atypical zinc-finger motif lies at 448-468; the sequence is YKCNLCDKTFSTPNEVVKHSC. Residues Lys465, Lys505, and Lys506 each participate in a glycyl lysine isopeptide (Lys-Gly) (interchain with G-Cter in SUMO2) cross-link.

Its subcellular location is the nucleus. May be involved in transcriptional regulation. In Homo sapiens (Human), this protein is Zinc finger and BTB domain-containing protein 2 (ZBTB2).